The chain runs to 358 residues: Myb family transcription factor APL (358 aa).

Positions 31–91 (TDPKPRLRWT…HLQKFRLGKQ (61 aa)) constitute an HTH myb-type domain. The H-T-H motif DNA-binding region spans 62 to 87 (PKTIMRVMGVKGLTLYHLKSHLQKFR). The stretch at 125–145 (RNMNEMQMEVQRRLHEQLEVQ) forms a coiled coil. Residues 138–143 (LHEQLE) carry the LHEQLE motif. The tract at residues 313-358 (RKSGLSGDEGNNGGKLLERPSPRRSPLSPMMNPNGGLIQGRNSPFG) is disordered.

The protein belongs to the MYB-CC family. Expressed in shoots and roots, specifically in the developing protophloem sieve elements. Detected in phloem and/or cambium. Expressed in the phloem tissues of various organs, including leaves and cotyledons, during vegetative growth.

The protein resides in the nucleus. Functionally, transcription factor required for phloem identity. Has a dual role both in promoting phloem differentiation and in repressing xylem differentiation during vascular development. Regulates the expression of the transcription factor NAC045 (AC A4VCM0). May activate the transcription of specific genes involved in phosphate uptake or assimilation. Promotes flowering through transcriptional activation of both FT and its transport machinery component, FTIP1. The polypeptide is Myb family transcription factor APL (Arabidopsis thaliana (Mouse-ear cress)).